The primary structure comprises 468 residues: Zinc transporter SLC39A7 (468 aa).

The helical transmembrane segment at 10–30 (WVAVGLLTWAALGLLVAGHEG) threads the bilayer. Basic and acidic residues-rich tracts occupy residues 36 to 56 (RDVE…DFHH) and 64 to 100 (HTHE…DSLH). The tract at residues 36–116 (RDVEEDFHGH…SHGASREAGA (81 aa)) is disordered. Histidine 64 carries the post-translational modification Pros-methylhistidine. Transmembrane regions (helical) follow at residues 132-152 (ALGA…LIPV), 163-183 (LQIL…LHLI), and 208-228 (GPIL…LVVE). The span at 237 to 248 (GHGHAHAHGHGH) shows a compositional bias: basic residues. The interval 237-313 (GHGHAHAHGH…NPEEEKTGSD (77 aa)) is disordered. Over residues 249-312 (SHGDSHAHGH…QNPEEEKTGS (64 aa)) the composition is skewed to basic and acidic residues. Helical transmembrane passes span 385–405 (LTAI…GGAV), 409–429 (VAGG…FIYV), and 447–467 (SLLE…IAHL).

It belongs to the ZIP transporter (TC 2.A.5) family. KE4/Catsup subfamily. In terms of assembly, homodimer. Rapidly phosphorylated by CK2 following Zn(2+) treatment. This phosphorylation is required for efficient cytosolic Zn(2+) release.

Its subcellular location is the endoplasmic reticulum membrane. The protein localises to the golgi apparatus. It localises to the cis-Golgi network membrane. It catalyses the reaction Zn(2+)(in) = Zn(2+)(out). Transports Zn(2+) from the endoplasmic reticulum (ER)/Golgi apparatus to the cytosol, playing an essential role in the regulation of cytosolic zinc levels. Acts as a gatekeeper of zinc release from intracellular stores, requiring post-translational activation by phosphorylation on residues, resulting in activation of multiple downstream pathways leading to cell growth and proliferation. Has an essential role in B cell development and is required for proper B cell receptor signaling. Plays an important role in maintaining intestinal epithelial homeostasis and skin dermis development by regulating ER function. Controls cell signaling pathways involved in glucose metabolism in skeletal muscle. Has a protective role against ER stress in different biological contexts. Mediates Zn(2+)-induced ferroptosis. The polypeptide is Zinc transporter SLC39A7 (Rattus norvegicus (Rat)).